A 61-amino-acid polypeptide reads, in one-letter code: Small ribosomal subunit protein uS14B (61 aa).

Zn(2+)-binding residues include C24, C27, C40, and C43.

The protein belongs to the universal ribosomal protein uS14 family. Zinc-binding uS14 subfamily. In terms of assembly, part of the 30S ribosomal subunit. Contacts proteins S3 and S10. Zn(2+) is required as a cofactor.

Binds 16S rRNA, required for the assembly of 30S particles and may also be responsible for determining the conformation of the 16S rRNA at the A site. In Cutibacterium acnes (strain DSM 16379 / KPA171202) (Propionibacterium acnes), this protein is Small ribosomal subunit protein uS14B.